The sequence spans 460 residues: Arginine biosynthesis bifunctional protein ArgJ, chloroplastic (460 aa).

A chloroplast-targeting transit peptide spans 1-26 (MYLSVPHYPSLKFTAFQSHKRNFRVF). 6 residues coordinate substrate: T202, K228, T239, E328, N455, and T460. The active-site Nucleophile is T239.

Belongs to the ArgJ family. As to quaternary structure, heterodimer of an alpha and a beta chain.

The protein localises to the plastid. It localises to the chloroplast. The catalysed reaction is N(2)-acetyl-L-ornithine + L-glutamate = N-acetyl-L-glutamate + L-ornithine. The enzyme catalyses L-glutamate + acetyl-CoA = N-acetyl-L-glutamate + CoA + H(+). The protein operates within amino-acid biosynthesis; L-arginine biosynthesis; L-ornithine and N-acetyl-L-glutamate from L-glutamate and N(2)-acetyl-L-ornithine (cyclic): step 1/1. It functions in the pathway amino-acid biosynthesis; L-arginine biosynthesis; N(2)-acetyl-L-ornithine from L-glutamate: step 1/4. Catalyzes two activities which are involved in the cyclic version of arginine biosynthesis: the synthesis of acetylglutamate from glutamate and acetyl-CoA, and of ornithine by transacetylation between acetylornithine and glutamate. The sequence is that of Arginine biosynthesis bifunctional protein ArgJ, chloroplastic from Citrullus lanatus (Watermelon).